The primary structure comprises 109 residues: Nucleoid-associated protein ECA1177 (109 aa).

Belongs to the YbaB/EbfC family. Homodimer.

It localises to the cytoplasm. The protein localises to the nucleoid. Functionally, binds to DNA and alters its conformation. May be involved in regulation of gene expression, nucleoid organization and DNA protection. The polypeptide is Nucleoid-associated protein ECA1177 (Pectobacterium atrosepticum (strain SCRI 1043 / ATCC BAA-672) (Erwinia carotovora subsp. atroseptica)).